The following is a 373-amino-acid chain: Velvet complex subunit RYP3 (373 aa).

Residues 1–10 (MYTLKQDRPH) are compositionally biased toward basic and acidic residues. Disordered stretches follow at residues 1–26 (MYTL…LQHG) and 344–373 (RKDG…ENEG). The Velvet domain occupies 48–344 (VYEGRIYSLD…AFQGIKIPIR (297 aa)). Residues 364 to 373 (GEGEDWENEG) are compositionally biased toward acidic residues.

The protein belongs to the velvet family. VelB subfamily. As to quaternary structure, component of the heterotrimeric velvet complex composed of LAE1, VEL1 and VEL2; VEL1A acting as a bridging protein between LAE1 and VEL2. Forms a heterodimeric complex with VOS1; the formation of the VEL2-VOS1 complex is light-dependent.

The protein localises to the nucleus. Its subcellular location is the cytoplasm. Functionally, component of the velvet transcription factor complex that controls sexual/asexual developmental ratio in response to light, promoting sexual development in the darkness while stimulating asexual sporulation under illumination. The velvet complex acts as a global regulator for secondary metabolite gene expression. Component of the RYP2-RYP3 heterodimeric complex that plays a dual role in activating genes associated with spore maturation and repressing certain development-associated genes. The complex binds DNA through the DNA-binding domain of RYP2 that recognizes an 11-nucleotide consensus sequence 5'-CTGGCCGCGGC-3' consisting of two motifs in the promoters of key developmental regulatory genes. Required for viable spore production and regulation of sporulation in response to temperature, as well as for the switch to yeast-form in the presence of host cells. The protein is Velvet complex subunit RYP3 (RYP3) of Ajellomyces capsulatus (Darling's disease fungus).